The following is a 463-amino-acid chain: Hydroxyacid-oxoacid transhydrogenase, mitochondrial (463 aa).

It belongs to the iron-containing alcohol dehydrogenase family. Hydroxyacid-oxoacid transhydrogenase subfamily.

Its subcellular location is the mitochondrion. The catalysed reaction is (S)-3-hydroxybutanoate + 2-oxoglutarate = (R)-2-hydroxyglutarate + acetoacetate. The enzyme catalyses 4-hydroxybutanoate + 2-oxoglutarate = (R)-2-hydroxyglutarate + succinate semialdehyde. In terms of biological role, catalyzes the cofactor-independent reversible oxidation of gamma-hydroxybutyrate (GHB) to succinic semialdehyde (SSA) coupled to reduction of 2-ketoglutarate (2-KG) to D-2-hydroxyglutarate (D-2-HG). L-3-hydroxybutyrate (L-3-OHB) is also a substrate for HOT when using 2-KG as hydrogen acceptor, resulting in the formation of D-2-HG. The sequence is that of Hydroxyacid-oxoacid transhydrogenase, mitochondrial (adhfe1) from Xenopus tropicalis (Western clawed frog).